The chain runs to 297 residues: Large ribosomal subunit protein uL3 (297 aa).

Disordered stretches follow at residues 124–143 and 258–297; these read NQKI…PVRQ and MKEK…DKGE.

The protein belongs to the universal ribosomal protein uL3 family. Part of the 50S ribosomal subunit. Forms a cluster with proteins L14 and L19.

In terms of biological role, one of the primary rRNA binding proteins, it binds directly near the 3'-end of the 23S rRNA, where it nucleates assembly of the 50S subunit. The sequence is that of Large ribosomal subunit protein uL3 from Mycoplasma mobile (strain ATCC 43663 / 163K / NCTC 11711) (Mesomycoplasma mobile).